The chain runs to 47 residues: Bifunctional chitinase/lysozyme (47 aa).

The GH18 domain maps to Gly1–Ala47.

This sequence belongs to the glycosyl hydrolase 18 family. Chitinase class II subfamily.

It localises to the secreted. The protein localises to the extracellular space. It carries out the reaction Random endo-hydrolysis of N-acetyl-beta-D-glucosaminide (1-&gt;4)-beta-linkages in chitin and chitodextrins.. The enzyme catalyses Hydrolysis of (1-&gt;4)-beta-linkages between N-acetylmuramic acid and N-acetyl-D-glucosamine residues in a peptidoglycan and between N-acetyl-D-glucosamine residues in chitodextrins.. In terms of biological role, bifunctional enzyme with lysozyme/chitinase activity. The chain is Bifunctional chitinase/lysozyme from Parthenocissus quinquefolia (Virginia creeper).